A 453-amino-acid chain; its full sequence is Pup--protein ligase (453 aa).

Glu-9 serves as a coordination point for Mg(2+). Arg-53 lines the ATP pocket. Tyr-55 provides a ligand contact to Mg(2+). Asp-57 acts as the Proton acceptor in catalysis. Glu-63 provides a ligand contact to Mg(2+). Thr-66 and Trp-420 together coordinate ATP.

This sequence belongs to the Pup ligase/Pup deamidase family. Pup-conjugating enzyme subfamily.

It catalyses the reaction ATP + [prokaryotic ubiquitin-like protein]-L-glutamate + [protein]-L-lysine = ADP + phosphate + N(6)-([prokaryotic ubiquitin-like protein]-gamma-L-glutamyl)-[protein]-L-lysine.. Its pathway is protein degradation; proteasomal Pup-dependent pathway. It participates in protein modification; protein pupylation. In terms of biological role, catalyzes the covalent attachment of the prokaryotic ubiquitin-like protein modifier Pup to the proteasomal substrate proteins, thereby targeting them for proteasomal degradation. This tagging system is termed pupylation. The ligation reaction involves the side-chain carboxylate of the C-terminal glutamate of Pup and the side-chain amino group of a substrate lysine. The sequence is that of Pup--protein ligase from Nocardioides sp. (strain ATCC BAA-499 / JS614).